A 106-amino-acid polypeptide reads, in one-letter code: Ferredoxin (106 aa).

The [3Fe-4S] cluster site is built by C8 and C16. 4 residues coordinate [4Fe-4S] cluster: C20, C39, C42, and C45. Residues 30–59 (RMLYIHPDECVDCGACEPVCPVEAIYYEDD) enclose the 4Fe-4S ferredoxin-type domain. C49 is a [3Fe-4S] cluster binding site. Residues 81 to 106 (PGGASKVGQTDNDPQAIKDLPPQGED) are disordered.

The cofactor is [4Fe-4S] cluster. Requires [3Fe-4S] cluster as cofactor.

Its function is as follows. Ferredoxins are iron-sulfur proteins that transfer electrons in a wide variety of metabolic reactions. In Mycolicibacterium smegmatis (Mycobacterium smegmatis), this protein is Ferredoxin (fdxA).